Here is a 369-residue protein sequence, read N- to C-terminus: 4-hydroxy-3-methylbut-2-en-1-yl diphosphate synthase (flavodoxin) (369 aa).

[4Fe-4S] cluster contacts are provided by C270, C273, C305, and E312.

Belongs to the IspG family. Requires [4Fe-4S] cluster as cofactor.

The enzyme catalyses (2E)-4-hydroxy-3-methylbut-2-enyl diphosphate + oxidized [flavodoxin] + H2O + 2 H(+) = 2-C-methyl-D-erythritol 2,4-cyclic diphosphate + reduced [flavodoxin]. It participates in isoprenoid biosynthesis; isopentenyl diphosphate biosynthesis via DXP pathway; isopentenyl diphosphate from 1-deoxy-D-xylulose 5-phosphate: step 5/6. Converts 2C-methyl-D-erythritol 2,4-cyclodiphosphate (ME-2,4cPP) into 1-hydroxy-2-methyl-2-(E)-butenyl 4-diphosphate. The sequence is that of 4-hydroxy-3-methylbut-2-en-1-yl diphosphate synthase (flavodoxin) from Pseudomonas syringae pv. syringae (strain B728a).